The sequence spans 624 residues: Chaperone protein DnaK (624 aa).

Residue T174 is modified to Phosphothreonine; by autocatalysis. Disordered regions lie at residues 470–504 and 577–624; these read ITIKSSSGLSDEEIKKMQKDAEEHAEEDKKRKEEV and NGGA…DPDK. Basic and acidic residues predominate over residues 481 to 504; it reads EEIKKMQKDAEEHAEEDKKRKEEV. Residues 577 to 605 show a composition bias toward low complexity; it reads NGGAQGAAGQAGPQGPQNGGQPNNDNGSD. Residues 615 to 624 are compositionally biased toward basic and acidic residues; that stretch reads GDFHKVDPDK.

The protein belongs to the heat shock protein 70 family.

Its function is as follows. Acts as a chaperone. This Lactobacillus johnsonii (strain CNCM I-12250 / La1 / NCC 533) protein is Chaperone protein DnaK.